A 235-amino-acid polypeptide reads, in one-letter code: Uridylate kinase (235 aa).

9–12 (KLSG) is an ATP binding site. Glycine 51 is a binding site for UMP. ATP contacts are provided by glycine 52 and arginine 56. Residues aspartate 71 and 132–139 (TGNPYFTT) each bind UMP. Residues threonine 159, tyrosine 165, and aspartate 168 each contribute to the ATP site.

The protein belongs to the UMP kinase family. In terms of assembly, homohexamer.

It localises to the cytoplasm. The catalysed reaction is UMP + ATP = UDP + ADP. The protein operates within pyrimidine metabolism; CTP biosynthesis via de novo pathway; UDP from UMP (UMPK route): step 1/1. Its activity is regulated as follows. Inhibited by UTP. Catalyzes the reversible phosphorylation of UMP to UDP. The polypeptide is Uridylate kinase (Cytophaga hutchinsonii (strain ATCC 33406 / DSM 1761 / CIP 103989 / NBRC 15051 / NCIMB 9469 / D465)).